Consider the following 207-residue polypeptide: Probable nicotinate-nucleotide adenylyltransferase (207 aa).

Belongs to the NadD family.

It catalyses the reaction nicotinate beta-D-ribonucleotide + ATP + H(+) = deamido-NAD(+) + diphosphate. It functions in the pathway cofactor biosynthesis; NAD(+) biosynthesis; deamido-NAD(+) from nicotinate D-ribonucleotide: step 1/1. Its function is as follows. Catalyzes the reversible adenylation of nicotinate mononucleotide (NaMN) to nicotinic acid adenine dinucleotide (NaAD). The protein is Probable nicotinate-nucleotide adenylyltransferase of Synechococcus sp. (strain JA-3-3Ab) (Cyanobacteria bacterium Yellowstone A-Prime).